An 88-amino-acid polypeptide reads, in one-letter code: Exodeoxyribonuclease 7 small subunit (88 aa).

Positions aspartate 69–glutamine 88 are disordered.

It belongs to the XseB family. In terms of assembly, heterooligomer composed of large and small subunits.

It localises to the cytoplasm. It carries out the reaction Exonucleolytic cleavage in either 5'- to 3'- or 3'- to 5'-direction to yield nucleoside 5'-phosphates.. In terms of biological role, bidirectionally degrades single-stranded DNA into large acid-insoluble oligonucleotides, which are then degraded further into small acid-soluble oligonucleotides. This chain is Exodeoxyribonuclease 7 small subunit, found in Xylella fastidiosa (strain M23).